We begin with the raw amino-acid sequence, 91 residues long: Cell division topological specificity factor (91 aa).

The protein belongs to the MinE family.

In terms of biological role, prevents the cell division inhibition by proteins MinC and MinD at internal division sites while permitting inhibition at polar sites. This ensures cell division at the proper site by restricting the formation of a division septum at the midpoint of the long axis of the cell. This chain is Cell division topological specificity factor, found in Erwinia tasmaniensis (strain DSM 17950 / CFBP 7177 / CIP 109463 / NCPPB 4357 / Et1/99).